The sequence spans 527 residues: EGF domain-specific O-linked N-acetylglucosamine transferase (527 aa).

Positions 1 to 17 (MFMLLVFGALLPEVPLS) are cleaved as a signal peptide. Residues 295-297 (DYD) carry the Required for optimal activity motif. Asn-354 is a glycosylation site (N-linked (GlcNAc...) asparagine). Positions 524 to 527 (HDEL) match the Prevents secretion from ER motif.

Belongs to the glycosyltransferase 61 family.

It localises to the endoplasmic reticulum lumen. It carries out the reaction L-seryl-[protein] + UDP-N-acetyl-alpha-D-glucosamine = 3-O-(N-acetyl-beta-D-glucosaminyl)-L-seryl-[protein] + UDP + H(+). It catalyses the reaction L-threonyl-[protein] + UDP-N-acetyl-alpha-D-glucosamine = 3-O-(N-acetyl-beta-D-glucosaminyl)-L-threonyl-[protein] + UDP + H(+). Catalyzes the transfer of a single N-acetylglucosamine from UDP-GlcNAc to a serine or threonine residue in extracellular proteins resulting in their modification with a beta-linked N-acetylglucosamine (O-GlcNAc). Specifically glycosylates the Thr residue located between the fifth and sixth conserved cysteines of folded EGF-like domains. This chain is EGF domain-specific O-linked N-acetylglucosamine transferase (EOGT), found in Bos taurus (Bovine).